Consider the following 391-residue polypeptide: MLKMAKVEPVERYCKVIRMIRFCVGFCGNDVADPNFRMWWLTYAVMAAIAFFFACTGYTIYVGVVINGDLTIILQALAMVGSAVQGLTKLLVTANNASHMREVQNTYEDIYREYGSKGDEYAKCLEKRIRITWTLLIGFMLVYIILLGLVITFPIFYLLILHQKVLVMQFLIPFLDHTTDGGHLILTAAHVILITFGGFGNYGGDMYLFLFVTHVPLIKDIFCVKLTEFNELVMKRNDFPKVRAMLCDLLVWHQLYTRMLQTTKKIYSIVLFVQLSTTCVGLLCTISCIFMKAWPAAPLYLLYAAITLYTFCGLGTLVENSNEDFLSVIYTNCLWYELPVKEEKLIIMMLAKAQNEVVLTAADMAPLSMNTALQLTKGIYSFSMMLMNYLG.

Residues 1 to 45 (MLKMAKVEPVERYCKVIRMIRFCVGFCGNDVADPNFRMWWLTYAV) lie on the Cytoplasmic side of the membrane. A helical transmembrane segment spans residues 46–66 (MAAIAFFFACTGYTIYVGVVI). The Extracellular portion of the chain corresponds to 67 to 71 (NGDLT). A helical membrane pass occupies residues 72-92 (IILQALAMVGSAVQGLTKLLV). Residues 93–140 (TANNASHMREVQNTYEDIYREYGSKGDEYAKCLEKRIRITWTLLIGFM) are Cytoplasmic-facing. A helical membrane pass occupies residues 141–161 (LVYIILLGLVITFPIFYLLIL). Residues 162-164 (HQK) are Extracellular-facing. Residues 165–185 (VLVMQFLIPFLDHTTDGGHLI) traverse the membrane as a helical segment. Residues 186-191 (LTAAHV) lie on the Cytoplasmic side of the membrane. The chain crosses the membrane as a helical span at residues 192–212 (ILITFGGFGNYGGDMYLFLFV). Over 213–268 (THVPLIKDIFCVKLTEFNELVMKRNDFPKVRAMLCDLLVWHQLYTRMLQTTKKIYS) the chain is Extracellular. A helical membrane pass occupies residues 269–289 (IVLFVQLSTTCVGLLCTISCI). Topologically, residues 290–297 (FMKAWPAA) are cytoplasmic. Residues 298-318 (PLYLLYAAITLYTFCGLGTLV) traverse the membrane as a helical segment. Residues 319–391 (ENSNEDFLSV…FSMMLMNYLG (73 aa)) are Extracellular-facing.

It belongs to the insect chemoreceptor superfamily. Heteromeric odorant receptor channel (TC 1.A.69) family. Or67d subfamily. Interacts with Orco. Complexes exist early in the endomembrane system in olfactory sensory neurons (OSNs), coupling these complexes to the conserved ciliary trafficking pathway. Expressed in antenna.

It is found in the cell membrane. Functionally, plays a role in detection and sensitivity to pheromones and signal transduction of the fatty-acid-derived male pheromone 11-cis vaccenyl acetate (cVA). Acts in concert with Snmp and lush to capture cVA molecules on the surface of Or67d expressing olfactory dendrites and facilitate their transfer to the odorant-receptor Orco complex. Necessary to mediate behavioral responses to cVA by regulating both male and female mating behavior. Activation of Or67d neurons by cVA inhibits courtship of other males, whereas in females their activation promotes receptivity to other males. May form a complex with Orco to form odorant-sensing units, providing sensitive and prolonged odorant signaling and calcium permeability. This chain is Odorant receptor 67d (Or67d), found in Drosophila melanogaster (Fruit fly).